A 74-amino-acid polypeptide reads, in one-letter code: Small ribosomal subunit protein eS17 (74 aa).

The protein belongs to the eukaryotic ribosomal protein eS17 family.

In Aeropyrum pernix (strain ATCC 700893 / DSM 11879 / JCM 9820 / NBRC 100138 / K1), this protein is Small ribosomal subunit protein eS17.